The primary structure comprises 262 residues: (2Z,6E)-farnesyl diphosphate synthase (262 aa).

Asp-40 is a catalytic residue. Asp-40 serves as a coordination point for Mg(2+). Substrate contacts are provided by residues 41–44 (GNRR), Trp-45, and 86–88 (STE). Residue Asn-89 is the Proton acceptor of the active site. Residues Arg-92, Arg-211, and 217-219 (RLS) contribute to the substrate site. Mg(2+) is bound at residue Glu-230.

This sequence belongs to the UPP synthase family. Z-FPP synthase subfamily. As to quaternary structure, homodimer. Mg(2+) is required as a cofactor.

It localises to the cytoplasm. The protein resides in the cell membrane. It catalyses the reaction isopentenyl diphosphate + (2E)-geranyl diphosphate = (2Z,6E)-farnesyl diphosphate + diphosphate. In terms of biological role, catalyzes the condensation of only one isopentenyl pyrophosphate (IPP) unit in the cis configuration to E-geranyl diphosphate (E-GPP) generating the 15 carbon product (2Z,6E)-farnesyl diphosphate (Z-FPP or EZ-FPP). Z-FPP is the precursor of decaprenyl diphosphate, which has a central role in the biosynthesis of the mycobacterial cell wall. The protein is (2Z,6E)-farnesyl diphosphate synthase of Mycobacterium tuberculosis (strain CDC 1551 / Oshkosh).